Here is a 501-residue protein sequence, read N- to C-terminus: Circadian clock oscillator protein KaiC (501 aa).

KaiC domains follow at residues 1–232 and 246–501; these read MQVQ…ITVF and IRIS…REKK. 17 residues coordinate ATP: Gly34, Thr35, Gly36, Lys37, Thr38, Ser74, Lys209, Leu210, Arg211, Thr213, His215, Thr275, Gly276, Thr277, Gly278, Lys279, and Thr280. Mg(2+) is bound at residue Thr38. Thr280 and Glu303 together coordinate Mg(2+). Trp316 serves as a coordination point for ATP. At Ser416 the chain carries Phosphoserine; by autocatalysis. At Thr417 the chain carries Phosphothreonine; by autocatalysis. ATP contacts are provided by Arg436, Lys442, Met443, Arg444, Ser446, His448, and Lys450.

The protein belongs to the KaiC family. In terms of assembly, homohexamer; hexamerization is dependent on ATP-binding. Component of the KaiBC complex. KaiC interacts with SasA, activating its autokinase function and leading to RpaA activation. The cofactor is Mg(2+). Post-translationally, phosphorylated on serine and threonine residues by autocatalysis. Has a 4 step phosphorylation cycle; the autokinase acts first on Thr-417, then Ser-416. When Ser-416 is modified KaiC switches to an autophosphatase mode, acting first on phospho-Thr-417 then phospho-Ser-416.

The enzyme catalyses L-seryl-[protein] + ATP = O-phospho-L-seryl-[protein] + ADP + H(+). The catalysed reaction is L-threonyl-[protein] + ATP = O-phospho-L-threonyl-[protein] + ADP + H(+). It catalyses the reaction ATP + H2O = ADP + phosphate + H(+). Functionally, central component of the KaiBC oscillator complex, which constitutes the main circadian regulator in cyanobacteria. Its composition changes during the circadian cycle to control KaiC phosphorylation. Autophosphorylates and has a weak ATPase activity; ATPase activity defines the circadian period. This chain is Circadian clock oscillator protein KaiC, found in Prochlorococcus marinus (strain SARG / CCMP1375 / SS120).